The primary structure comprises 392 residues: Basic salivary proline-rich protein 1 (392 aa).

The signal sequence occupies residues 1–16; that stretch reads MLLILLSVALLALSSA. Residue Q17 is modified to Pyrrolidone carboxylic acid. Polar residues predominate over residues 19-28; the sequence is LNEDVSQEES. A disordered region spans residues 19–392; it reads LNEDVSQEES…QGGRPSRPPQ (374 aa). Residues 34–47 show a composition bias toward low complexity; it reads GNPQGPSPQGGNKP. Phosphoserine; alternate is present on S40. A glycan (O-linked (Hex) serine; alternate) is linked at S40. Over residues 48–83 the composition is skewed to pro residues; the sequence is QGPPPPPGKPQGPPPQGGNKPQGPPPPGKPQGPPPQ. A run of 15 repeats spans residues 53 to 72, 73 to 92, 93 to 112, 114 to 133, 134 to 153, 154 to 173, 175 to 194, 195 to 214, 215 to 234, 236 to 255, 256 to 275, 276 to 295, 297 to 316, 317 to 336, and 338 to 357. The interval 53–357 is 15 X 20 AA approximate tandem repeats of P-P-G-K-P-Q-G-P-P-[PAQ]-Q-[GE]-[GD]-[NKS]-[KSQRN]-[PRQS]-[QS] [GPS]-[PQAR]-[PSR]; sequence PPGKPQGPPP…QEGNNPQGPP (305 aa). Residue S87 is glycosylated (O-linked (HexNAc...) serine). A compositionally biased stretch (pro residues) spans 91–144; sequence RSPPGKPQGPPPQGGNQPQGPPPPPGKPQGPPPQGGNKPQGPPPPGKPQGPPPQ. Residue S92 is modified to Phosphoserine. S150 is subject to Phosphoserine; alternate. The O-linked (Hex) serine; alternate glycan is linked to S150. 4 stretches are compositionally biased toward pro residues: residues 152–205, 213–243, 252–266, and 274–324; these read RSPP…PPPQ, RSPP…PQGP, QGPP…PPPQ, and QSPP…PQGP. The span at 325–334 shows a compositional bias: low complexity; it reads PAQGGSKSQS. O-linked (HexNAc...) serine glycosylation occurs at S330. The span at 354 to 392 shows a compositional bias: pro residues; that stretch reads QGPPPPAGGNPQQPQAPPAGQPQGPPRPPQGGRPSRPPQ.

Post-translationally, O-glycosylated. O-glycosylation on Ser-87 is prevalent in head and neck cancer patients. O-Glycosylation on Ser-330 has a 5 times prevalence in head and neck cancers. In terms of processing, proteolytically cleaved at the tripeptide Xaa-Pro-Gln, where Xaa in the P(3) position is mostly lysine. The endoprotease may be of microbial origin. Pyroglutamate formation occurs on terminal Gln residues of cleaved peptides. Besides on the N-terminal of mature PBR1, pyroglutamate formation found on at least Gln-58.

It localises to the secreted. This is Basic salivary proline-rich protein 1 (PRB1) from Homo sapiens (Human).